The following is a 346-amino-acid chain: Queuosine 5'-phosphate N-glycosylase/hydrolase (346 aa).

Queuine contacts are provided by H49, F243, D245, D310, and D315. D245 serves as the catalytic Nucleophile or transition state stabilizer.

Belongs to the QNG1 protein family.

The catalysed reaction is queuosine 5'-phosphate + H2O = queuine + D-ribose 5-phosphate. Its function is as follows. Catalyzes the hydrolysis of queuosine 5'-phosphate, releasing the nucleobase queuine (q). Is required for salvage of queuine from exogenous queuosine (Q) that is imported and then converted to queuosine 5'-phosphate intracellularly. The protein is Queuosine 5'-phosphate N-glycosylase/hydrolase of Schizosaccharomyces pombe (strain 972 / ATCC 24843) (Fission yeast).